Here is a 131-residue protein sequence, read N- to C-terminus: Small ribosomal subunit protein uS8 (131 aa).

It belongs to the universal ribosomal protein uS8 family. Part of the 30S ribosomal subunit. Contacts proteins S5 and S12.

Its function is as follows. One of the primary rRNA binding proteins, it binds directly to 16S rRNA central domain where it helps coordinate assembly of the platform of the 30S subunit. The chain is Small ribosomal subunit protein uS8 from Campylobacter fetus subsp. fetus (strain 82-40).